The chain runs to 362 residues: MKASIRVKLETLVERYEEVQHLLGDPGVIGDQNKFRALSREYSQLEEVTQCFQAYEKVQEDLVAAQEMAQEDDAEMREMAQDEIKEAKEASERLTDELQVLLIPKDPNDERNCFLEIRAGAGGDEAGIFAGNLFRMYSRFAEKKGWRIEVMSSHASEQGGFKEMIAKVSGDGAYGILKFESGGHRVQRVPETESQGRVHTSACTIAVMAEIPEADLPEIKSSDLKIDTFRSSGAGGQHVNTTDSAIRITHLPTGTVVECQDERSQHKNKAKAMSVLAARIIQAEEARRAAVVSDTRRNLLGSGDRSDRIRTYNYPQSRVSDHRINLTIYRLNEVMEGDLAALIEPVVLEYQADQLAALAEQN.

Q237 carries the N5-methylglutamine modification.

This sequence belongs to the prokaryotic/mitochondrial release factor family. Methylated by PrmC. Methylation increases the termination efficiency of RF1.

It is found in the cytoplasm. Functionally, peptide chain release factor 1 directs the termination of translation in response to the peptide chain termination codons UAG and UAA. This Aliivibrio salmonicida (strain LFI1238) (Vibrio salmonicida (strain LFI1238)) protein is Peptide chain release factor 1.